The primary structure comprises 185 residues: Transcriptional repressor NrdR (185 aa).

Residues 1–24 are disordered; the sequence is MRCPFCGGPDTQVKDSRPSEDSSA. Residues 3-34 fold into a zinc finger; that stretch reads CPFCGGPDTQVKDSRPSEDSSAIRRRRVCPDC. Positions 12–24 are enriched in basic and acidic residues; that stretch reads QVKDSRPSEDSSA. Residues 49-139 form the ATP-cone domain; sequence LVVLKRSGKR…VYKNFREAQD (91 aa). Positions 149–185 are disordered; the sequence is ERLEGEGDLPEDGEAAPAPPDEVVAAPRRGRPARKRA. A compositionally biased stretch (basic residues) spans 176–185; it reads RRGRPARKRA.

This sequence belongs to the NrdR family. Requires Zn(2+) as cofactor.

Functionally, negatively regulates transcription of bacterial ribonucleotide reductase nrd genes and operons by binding to NrdR-boxes. This chain is Transcriptional repressor NrdR, found in Methylorubrum extorquens (strain PA1) (Methylobacterium extorquens).